We begin with the raw amino-acid sequence, 60 residues long: Large ribosomal subunit protein bL32 (60 aa).

The interval 1–60 (MAVQQVKKSRSKRDMRRSHDSLTNPTLSTDKSTGELHLRHHVSPNGFYKGRKVVDTKSED) is disordered. A compositionally biased stretch (basic residues) spans 7-16 (KKSRSKRDMR). Over residues 22-31 (LTNPTLSTDK) the composition is skewed to polar residues.

The protein belongs to the bacterial ribosomal protein bL32 family.

The chain is Large ribosomal subunit protein bL32 from Francisella tularensis subsp. holarctica (strain LVS).